The primary structure comprises 358 residues: Fructose-bisphosphate aldolase class 2 (358 aa).

Residue Ser-61 participates in D-glyceraldehyde 3-phosphate binding. The active-site Proton donor is the Asp-109. Zn(2+) is bound by residues His-110, Asp-144, Glu-174, and His-226. Gly-227 lines the dihydroxyacetone phosphate pocket. His-264 contacts Zn(2+). Dihydroxyacetone phosphate-binding positions include 265 to 267 (GGS) and 286 to 289 (NIDT).

The protein belongs to the class II fructose-bisphosphate aldolase family. Requires Zn(2+) as cofactor.

The enzyme catalyses beta-D-fructose 1,6-bisphosphate = D-glyceraldehyde 3-phosphate + dihydroxyacetone phosphate. It functions in the pathway carbohydrate degradation; glycolysis; D-glyceraldehyde 3-phosphate and glycerone phosphate from D-glucose: step 4/4. Catalyzes the aldol condensation of dihydroxyacetone phosphate (DHAP or glycerone-phosphate) with glyceraldehyde 3-phosphate (G3P) to form fructose 1,6-bisphosphate (FBP) in gluconeogenesis and the reverse reaction in glycolysis. This Buchnera aphidicola subsp. Acyrthosiphon pisum (strain APS) (Acyrthosiphon pisum symbiotic bacterium) protein is Fructose-bisphosphate aldolase class 2 (fbaA).